A 459-amino-acid polypeptide reads, in one-letter code: MRTELANKVVSVETEKRLSLKEKMSYGFGDFGNGFMFDLGQIYLLKYFTDVAGIPAAMAGGIFLVSKLFAAITDPIVGSSIDYRKNIGKRGKFRPYLLIGSIVLAVLTVLIFLSPNVSTTGKLIYAYASYMIWGIGYSFVNIPYGSLGAAMTQNSEDRTSISTFRQIGSLGALFITSVAVMPLLVKFDNPKVGYPVVMGLFAALGVFWFYICYRNCKERIIISEAPKEKLTLSSVVKTFITNKPLLTLVLMTIFSISAYNIKSAMLVYFAQYNLGNVELMAYMNFIIIGSSFLGVVFLPKLVKMFGKKRTAMIGFGISVAADLINFMLPSNVYVFTILASIAFIGISIPNGITWALVSDIIDYGEWKSGERKEATTYSLFNFSRKLAQSLSGFLSGIGLGIIGYVPNAVQTAQALIGIKALLLLYPAIALALAMFIIGFLYKLTDQQHAQIVQDLHQKS.

Helical transmembrane passes span 25-45 (SYGFGDFGNGFMFDLGQIYLL), 52-72 (AGIPAAMAGGIFLVSKLFAAI), 95-115 (PYLLIGSIVLAVLTVLIFLSP), 123-143 (LIYAYASYMIWGIGYSFVNIP), 167-187 (IGSLGALFITSVAVMPLLVKF), 192-212 (VGYPVVMGLFAALGVFWFYIC), 249-269 (VLMTIFSISAYNIKSAMLVYF), 279-299 (LMAYMNFIIIGSSFLGVVFLP), 310-330 (TAMIGFGISVAADLINFMLPS), 332-352 (VYVFTILASIAFIGISIPNGI), 389-409 (SLSGFLSGIGLGIIGYVPNAV), and 420-440 (ALLLLYPAIALALAMFIIGFL).

Belongs to the sodium:galactoside symporter (TC 2.A.2) family.

It localises to the cell membrane. This is an uncharacterized protein from Bacillus subtilis (strain 168).